The following is a 693-amino-acid chain: Phosphoribosylformylglycinamidine synthase subunit PurL (693 aa).

H34 is a catalytic residue. ATP-binding residues include Y37 and K76. E78 is a binding site for Mg(2+). Substrate is bound by residues 79-82 and R101; that span reads SHNH. H80 serves as the catalytic Proton acceptor. D102 is a binding site for Mg(2+). Q222 provides a ligand contact to substrate. D248 is a binding site for Mg(2+). Position 292-294 (292-294) interacts with substrate; that stretch reads ETQ. Residues D470 and G507 each contribute to the ATP site. S510 provides a ligand contact to substrate.

It belongs to the FGAMS family. As to quaternary structure, monomer. Part of the FGAM synthase complex composed of 1 PurL, 1 PurQ and 2 PurS subunits.

The protein localises to the cytoplasm. The enzyme catalyses N(2)-formyl-N(1)-(5-phospho-beta-D-ribosyl)glycinamide + L-glutamine + ATP + H2O = 2-formamido-N(1)-(5-O-phospho-beta-D-ribosyl)acetamidine + L-glutamate + ADP + phosphate + H(+). Its pathway is purine metabolism; IMP biosynthesis via de novo pathway; 5-amino-1-(5-phospho-D-ribosyl)imidazole from N(2)-formyl-N(1)-(5-phospho-D-ribosyl)glycinamide: step 1/2. In terms of biological role, part of the phosphoribosylformylglycinamidine synthase complex involved in the purines biosynthetic pathway. Catalyzes the ATP-dependent conversion of formylglycinamide ribonucleotide (FGAR) and glutamine to yield formylglycinamidine ribonucleotide (FGAM) and glutamate. The FGAM synthase complex is composed of three subunits. PurQ produces an ammonia molecule by converting glutamine to glutamate. PurL transfers the ammonia molecule to FGAR to form FGAM in an ATP-dependent manner. PurS interacts with PurQ and PurL and is thought to assist in the transfer of the ammonia molecule from PurQ to PurL. The sequence is that of Phosphoribosylformylglycinamidine synthase subunit PurL from Pyrobaculum neutrophilum (strain DSM 2338 / JCM 9278 / NBRC 100436 / V24Sta) (Thermoproteus neutrophilus).